The chain runs to 84 residues: Small ribosomal subunit protein bS18A (84 aa).

Belongs to the bacterial ribosomal protein bS18 family. Part of the 30S ribosomal subunit. Forms a tight heterodimer with protein bS6.

Its function is as follows. Binds as a heterodimer with protein bS6 to the central domain of the 16S rRNA, where it helps stabilize the platform of the 30S subunit. The chain is Small ribosomal subunit protein bS18A from Mycolicibacterium paratuberculosis (strain ATCC BAA-968 / K-10) (Mycobacterium paratuberculosis).